The following is a 302-amino-acid chain: 4-diphosphocytidyl-2-C-methyl-D-erythritol kinase (302 aa).

The active site involves Lys13. 101-111 serves as a coordination point for ATP; it reads PVASGIGGGSS. The active site involves Asp143.

It belongs to the GHMP kinase family. IspE subfamily.

It catalyses the reaction 4-CDP-2-C-methyl-D-erythritol + ATP = 4-CDP-2-C-methyl-D-erythritol 2-phosphate + ADP + H(+). The protein operates within isoprenoid biosynthesis; isopentenyl diphosphate biosynthesis via DXP pathway; isopentenyl diphosphate from 1-deoxy-D-xylulose 5-phosphate: step 3/6. Catalyzes the phosphorylation of the position 2 hydroxy group of 4-diphosphocytidyl-2C-methyl-D-erythritol. This is 4-diphosphocytidyl-2-C-methyl-D-erythritol kinase from Granulibacter bethesdensis (strain ATCC BAA-1260 / CGDNIH1).